The chain runs to 240 residues: Adenosylcobinamide-GDP ribazoletransferase (240 aa).

The next 5 helical transmembrane spans lie at 31-51 (LLYY…ASHL), 57-77 (APLH…ALHL), 109-129 (IAVV…WVLV), 133-153 (VGAQ…GLFL), and 185-205 (LFCL…FAWL).

Belongs to the CobS family. The cofactor is Mg(2+).

It localises to the cell inner membrane. It catalyses the reaction alpha-ribazole + adenosylcob(III)inamide-GDP = adenosylcob(III)alamin + GMP + H(+). It carries out the reaction alpha-ribazole 5'-phosphate + adenosylcob(III)inamide-GDP = adenosylcob(III)alamin 5'-phosphate + GMP + H(+). It functions in the pathway cofactor biosynthesis; adenosylcobalamin biosynthesis; adenosylcobalamin from cob(II)yrinate a,c-diamide: step 7/7. Its function is as follows. Joins adenosylcobinamide-GDP and alpha-ribazole to generate adenosylcobalamin (Ado-cobalamin). Also synthesizes adenosylcobalamin 5'-phosphate from adenosylcobinamide-GDP and alpha-ribazole 5'-phosphate. The sequence is that of Adenosylcobinamide-GDP ribazoletransferase from Pseudomonas putida (strain GB-1).